Here is a 169-residue protein sequence, read N- to C-terminus: Putative glycine cleavage system H protein, mitochondrial (169 aa).

Residues 60 to 142 enclose the Lipoyl-binding domain; that stretch reads VGTVGITSYA…EEEGWICKIK (83 aa). Lysine 101 carries the post-translational modification N6-lipoyllysine. Serine 131 is modified (phosphoserine).

The protein belongs to the GcvH family. In terms of assembly, component of the glycine decarboxylase complex (GDC), which is composed of four proteins: P, T, L and H. Requires (R)-lipoate as cofactor.

The protein localises to the mitochondrion. Its function is as follows. The glycine cleavage system (glycine decarboxylase complex) catalyzes the degradation of glycine. The H protein shuttles the methylamine group of glycine from the P protein to the T protein. The polypeptide is Putative glycine cleavage system H protein, mitochondrial (gcv3) (Schizosaccharomyces pombe (strain 972 / ATCC 24843) (Fission yeast)).